Reading from the N-terminus, the 108-residue chain is Urease subunit gamma (108 aa).

This sequence belongs to the urease gamma subunit family. As to quaternary structure, heterotrimer of UreA (gamma), UreB (beta) and UreC (alpha) subunits. Three heterotrimers associate to form the active enzyme.

It is found in the cytoplasm. The enzyme catalyses urea + 2 H2O + H(+) = hydrogencarbonate + 2 NH4(+). Its pathway is nitrogen metabolism; urea degradation; CO(2) and NH(3) from urea (urease route): step 1/1. This is Urease subunit gamma from Trichodesmium erythraeum (strain IMS101).